We begin with the raw amino-acid sequence, 616 residues long: Polypeptide N-acetylgalactosaminyltransferase 3 (616 aa).

The helical; Signal-anchor for type II membrane protein transmembrane segment at Phe-13–Phe-33 threads the bilayer. The catalytic subdomain A stretch occupies residues Leu-182 to Arg-291. Mn(2+) contacts are provided by Asp-275, His-277, and His-413. The catalytic subdomain B stretch occupies residues Pro-354–Arg-416. A glycan (N-linked (GlcNAc...) asparagine) is linked at Asn-482. In terms of domain architecture, Ricin B-type lectin spans Asn-512 to Asp-616. A disulfide bridge connects residues Cys-515 and Cys-533. Asp-517, Glu-520, His-534, and Asn-539 together coordinate UDP-N-acetyl-alpha-D-galactosamine. A disulfide bridge links Cys-588 with Cys-601.

The protein belongs to the glycosyltransferase 2 family. GalNAc-T subfamily. It depends on Mn(2+) as a cofactor.

Its subcellular location is the golgi apparatus. The protein resides in the golgi stack membrane. The enzyme catalyses L-seryl-[protein] + UDP-N-acetyl-alpha-D-galactosamine = a 3-O-[N-acetyl-alpha-D-galactosaminyl]-L-seryl-[protein] + UDP + H(+). The catalysed reaction is L-threonyl-[protein] + UDP-N-acetyl-alpha-D-galactosamine = a 3-O-[N-acetyl-alpha-D-galactosaminyl]-L-threonyl-[protein] + UDP + H(+). It functions in the pathway protein modification; protein glycosylation. Functionally, catalyzes the initial reaction in O-linked oligosaccharide biosynthesis, the transfer of an N-acetyl-D-galactosamine residue to a serine or threonine residue on the protein receptor. Glycosylates FGF23. This is Polypeptide N-acetylgalactosaminyltransferase 3 (GALNT3) from Taeniopygia guttata (Zebra finch).